The following is a 291-amino-acid chain: Protease HtpX homolog (291 aa).

Transmembrane regions (helical) follow at residues 4 to 24 (ILLF…VASL) and 39 to 59 (GSLL…SLLI). His-144 contributes to the Zn(2+) binding site. Glu-145 is a catalytic residue. Zn(2+) is bound at residue His-148. 2 helical membrane-spanning segments follow: residues 159–179 (LIQG…AFAI) and 199–219 (ITTV…VAWF). Glu-224 is a Zn(2+) binding site.

Belongs to the peptidase M48B family. Zn(2+) serves as cofactor.

The protein resides in the cell inner membrane. This chain is Protease HtpX homolog, found in Albidiferax ferrireducens (strain ATCC BAA-621 / DSM 15236 / T118) (Rhodoferax ferrireducens).